The following is a 106-amino-acid chain: Large ribosomal subunit protein eL30 (106 aa).

This sequence belongs to the eukaryotic ribosomal protein eL30 family.

The protein is Large ribosomal subunit protein eL30 of Methanococcus maripaludis (strain C5 / ATCC BAA-1333).